The primary structure comprises 514 residues: Chromosomal replication initiator protein DnaA (514 aa).

Residues 1–90 (MSVELWQQCV…KRSRTPRAAI (90 aa)) are domain I, interacts with DnaA modulators. The domain II stretch occupies residues 91–177 (VPSQTHVAPP…QVEGALKHTS (87 aa)). Positions 178–394 (YLNRTFTFEN…GALKRVIAHS (217 aa)) are domain III, AAA+ region. Positions 222, 224, 225, and 226 each coordinate ATP. The tract at residues 395–514 (HFMGRPITIE…YKNLLRTLTT (120 aa)) is domain IV, binds dsDNA.

It belongs to the DnaA family. As to quaternary structure, oligomerizes as a right-handed, spiral filament on DNA at oriC.

The protein localises to the cytoplasm. In terms of biological role, plays an essential role in the initiation and regulation of chromosomal replication. ATP-DnaA binds to the origin of replication (oriC) to initiate formation of the DNA replication initiation complex once per cell cycle. Binds the DnaA box (a 9 base pair repeat at the origin) and separates the double-stranded (ds)DNA. Forms a right-handed helical filament on oriC DNA; dsDNA binds to the exterior of the filament while single-stranded (ss)DNA is stabiized in the filament's interior. The ATP-DnaA-oriC complex binds and stabilizes one strand of the AT-rich DNA unwinding element (DUE), permitting loading of DNA polymerase. After initiation quickly degrades to an ADP-DnaA complex that is not apt for DNA replication. Binds acidic phospholipids. This chain is Chromosomal replication initiator protein DnaA, found in Pseudomonas aeruginosa (strain LESB58).